The chain runs to 260 residues: Acyl-[acyl-carrier-protein]--UDP-N-acetylglucosamine O-acyltransferase (260 aa).

This sequence belongs to the transferase hexapeptide repeat family. LpxA subfamily. Homotrimer.

The protein localises to the cytoplasm. It catalyses the reaction a (3R)-hydroxyacyl-[ACP] + UDP-N-acetyl-alpha-D-glucosamine = a UDP-3-O-[(3R)-3-hydroxyacyl]-N-acetyl-alpha-D-glucosamine + holo-[ACP]. It functions in the pathway glycolipid biosynthesis; lipid IV(A) biosynthesis; lipid IV(A) from (3R)-3-hydroxytetradecanoyl-[acyl-carrier-protein] and UDP-N-acetyl-alpha-D-glucosamine: step 1/6. Functionally, involved in the biosynthesis of lipid A, a phosphorylated glycolipid that anchors the lipopolysaccharide to the outer membrane of the cell. The chain is Acyl-[acyl-carrier-protein]--UDP-N-acetylglucosamine O-acyltransferase from Sulfurovum sp. (strain NBC37-1).